The primary structure comprises 581 residues: Bifunctional lycopene cyclase/phytoene synthase (581 aa).

A lycopene beta-cyclase region spans residues 1–243 (MGFDYALVHL…IVFGQLAFDN (243 aa)). 7 helical membrane-spanning segments follow: residues 3-23 (FDYALVHLKYTIPPAVLLTLL), 35-55 (KVAFLVTIAVVATIPWDSYLI), 65-85 (HVIIGPTLFDIPLEEVFFFVV), 120-140 (LKRLIGQAILLGAIAWGWFCV), 152-172 (ILIWAGPFLLLLWSLAYQFII), 173-193 (GLPFTNTLLPIVLPTLYLWIV), and 221-241 (IEEALFFLLTNVLIVFGQLAF). The phytoene synthase stretch occupies residues 250 to 581 (AFPHLFPDPS…RVLVAWRTLN (332 aa)).

The protein in the N-terminal section; belongs to the lycopene beta-cyclase family. This sequence in the C-terminal section; belongs to the phytoene/squalene synthase family.

It localises to the membrane. It catalyses the reaction all-trans-lycopene = gamma-carotene. The enzyme catalyses gamma-carotene = all-trans-beta-carotene. The catalysed reaction is 2 (2E,6E,10E)-geranylgeranyl diphosphate = 15-cis-phytoene + 2 diphosphate. Its pathway is carotenoid biosynthesis; beta-carotene biosynthesis. It participates in carotenoid biosynthesis; phytoene biosynthesis; all-trans-phytoene from geranylgeranyl diphosphate: step 1/1. In terms of biological role, bifunctional enzyme that catalyzes the reactions from geranylgeranyl diphosphate to phytoene (phytoene synthase) and lycopene to beta-carotene via the intermediate gamma-carotene (lycopene cyclase). The protein is Bifunctional lycopene cyclase/phytoene synthase of Leptosphaeria maculans (strain JN3 / isolate v23.1.3 / race Av1-4-5-6-7-8) (Blackleg fungus).